The primary structure comprises 186 residues: Ribosome-recycling factor (186 aa).

This sequence belongs to the RRF family.

It localises to the cytoplasm. Its function is as follows. Responsible for the release of ribosomes from messenger RNA at the termination of protein biosynthesis. May increase the efficiency of translation by recycling ribosomes from one round of translation to another. The polypeptide is Ribosome-recycling factor (Azorhizobium caulinodans (strain ATCC 43989 / DSM 5975 / JCM 20966 / LMG 6465 / NBRC 14845 / NCIMB 13405 / ORS 571)).